Consider the following 41-residue polypeptide: Large ribosomal subunit protein bL36A (41 aa).

It belongs to the bacterial ribosomal protein bL36 family.

This Aeromonas salmonicida (strain A449) protein is Large ribosomal subunit protein bL36A.